Here is a 117-residue protein sequence, read N- to C-terminus: uncharacterized protein (117 aa).

Residues 4–26 form a helical membrane-spanning segment; that stretch reads VLNFHFSYIYTYFITITTNYKYG.

Its subcellular location is the host membrane. This is an uncharacterized protein from Sulfolobus islandicus rod-shaped virus 1 (SIRV-1).